The sequence spans 80 residues: Large ribosomal subunit protein uL24 (80 aa).

This sequence belongs to the universal ribosomal protein uL24 family. Part of the 50S ribosomal subunit.

One of two assembly initiator proteins, it binds directly to the 5'-end of the 23S rRNA, where it nucleates assembly of the 50S subunit. Functionally, one of the proteins that surrounds the polypeptide exit tunnel on the outside of the subunit. This is Large ribosomal subunit protein uL24 from Chlorobaculum parvum (strain DSM 263 / NCIMB 8327) (Chlorobium vibrioforme subsp. thiosulfatophilum).